Reading from the N-terminus, the 283-residue chain is Non-selective voltage-gated ion channel VDAC3 (283 aa).

Position 2 is an N-acetylcysteine (Cys2). The residue at position 4 (Thr4) is a Phosphothreonine. N6-acetyllysine occurs at positions 12, 15, and 20. 2 beta stranded membrane passes run Met26–Ser35 and Val39–Ala47. A Glycyl lysine isopeptide (Lys-Gly) (interchain with G-Cter in ubiquitin) cross-link involves residue Lys53. Transmembrane regions (beta stranded) follow at residues Ala54–Ile64, Leu69–Asn76, and Thr80–Asn89. Lys90 is subject to N6-acetyllysine. The beta stranded transmembrane segment at Leu95–Val104 threads the bilayer. Glycyl lysine isopeptide (Lys-Gly) (interchain with G-Cter in ubiquitin) cross-links involve residues Lys109 and Lys110. Transmembrane regions (beta stranded) follow at residues Ser111 to Arg120, Phe123 to Asp130, Thr137 to Ala145, Leu150 to Asp158, Lys163 to Ala175, Phe178 to Asn185, Glu189 to Val198, Ile202 to Thr211, Arg218 to Leu227, and Thr231 to Asn238. A Phosphoserine modification is found at Ser241. NAD(+) is bound by residues Leu242–Gly244 and Ser260–Asp264. 2 consecutive transmembrane segments (beta stranded) span residues Leu242–Leu251 and Gly254–Ile263. Lys266 is modified (N6-acetyllysine; alternate). Residue Lys266 forms a Glycyl lysine isopeptide (Lys-Gly) (interchain with G-Cter in ubiquitin); alternate linkage. A beta stranded membrane pass occupies residues His273 to Glu282.

Belongs to the eukaryotic mitochondrial porin family. Interacts with ARMC12 in a TBC1D21-dependent manner. Interacts with MISFA. In terms of processing, ubiquitinated by PRKN during mitophagy, leading to its degradation and enhancement of mitophagy. Deubiquitinated by USP30.

It is found in the mitochondrion outer membrane. The protein resides in the membrane. The enzyme catalyses chloride(in) = chloride(out). The catalysed reaction is K(+)(in) = K(+)(out). Non-selective voltage-gated ion channel that mediates the transport of anions and cations through the mitochondrion outer membrane and plasma membrane. Forms a high-conducting channel with a stable open state and a voltage-induced closure with a mild preference for anions over cations. Involved in male fertility and sperm mitochondrial sheath formation. The chain is Non-selective voltage-gated ion channel VDAC3 from Bos taurus (Bovine).